The chain runs to 553 residues: 4-coumarate--CoA ligase (553 aa).

The ATP site is built by Ser-198, Ser-199, Gly-200, Thr-201, Thr-202, and Lys-206. 2 residues coordinate (E)-4-coumaroyl-AMP: Tyr-248 and Ser-252. CoA is bound at residue Lys-269. Residues 271–340 (EIVPFLELIQ…AKFPNAKLGQ (70 aa)) are SBD1. 5 residues coordinate (E)-4-coumaroyl-AMP: Ala-318, Gln-340, Gly-341, Thr-345, and Met-353. Gln-340, Gly-341, and Thr-345 together coordinate ATP. An SBD2 region spans residues 341–408 (GYGMTEAGPV…IRGDQIMKGY (68 aa)). Positions 429 and 444 each coordinate ATP. Residues Lys-446 and Lys-450 each coordinate (E)-4-coumaroyl-AMP. Lys-452 and Gly-453 together coordinate CoA. Residue Lys-535 coordinates ATP.

This sequence belongs to the ATP-dependent AMP-binding enzyme family. Mg(2+) is required as a cofactor.

The catalysed reaction is (E)-4-coumarate + ATP + CoA = (E)-4-coumaroyl-CoA + AMP + diphosphate. It carries out the reaction (E)-4-coumarate + ATP + H(+) = (E)-4-coumaroyl-AMP + diphosphate. It catalyses the reaction (E)-4-coumaroyl-AMP + CoA = (E)-4-coumaroyl-CoA + AMP + H(+). It participates in phytoalexin biosynthesis; 3,4',5-trihydroxystilbene biosynthesis; 3,4',5-trihydroxystilbene from trans-4-coumarate: step 1/2. Its function is as follows. Carboxylate--CoA ligase that may use 4-coumarate as substrate. Follows a two-step reaction mechanism, wherein the carboxylate substrate first undergoes adenylation by ATP, followed by a thioesterification in the presence of CoA to yield the final CoA thioester. In Vanilla planifolia (Vanilla), this protein is 4-coumarate--CoA ligase.